A 570-amino-acid chain; its full sequence is Serine/threonine-protein kinase Pink1, mitochondrial (570 aa).

A mitochondrion-targeting transit peptide spans 1–5 (MSVRA). Residues 6-96 (VGSRLFKHGR…AELRKKATRR (91 aa)) are Mitochondrial intermembrane-facing. Residues 97 to 120 (ILFGDSAPFFALVGVSIASGTGIL) traverse the membrane as a helical segment. The Cytoplasmic portion of the chain corresponds to 121–570 (TKEEELEGVC…WIQENLPELD (450 aa)). Residues 162 to 484 (LSLGKPIAKG…VAANVCQLFL (323 aa)) form the Protein kinase domain. K196 is a binding site for ATP. S205 is modified (phosphoserine; by autocatalysis). E217 contacts Mg(2+). 3 residues coordinate ATP: K295, Y297, and N300. D337 acts as the Proton acceptor in catalysis. D341 lines the ATP pocket. Mg(2+)-binding residues include N342 and D359. Position 359 (D359) interacts with ATP. S377 is modified (phosphoserine; by autocatalysis). Phosphothreonine; by autocatalysis is present on T386. Position 530 is a phosphothreonine (T530).

The protein belongs to the protein kinase superfamily. Ser/Thr protein kinase family. Requires Mg(2+) as cofactor. In terms of processing, proteolytically cleaved. In healthy cells, the precursor is continuously imported into mitochondria where it is proteolytically cleaved into its short form by the mitochondrial rhomboid protease rho-7 (TcasGA2_TC013516). The short form is then released into the cytosol where it rapidly undergoes proteasome-dependent degradation. In unhealthy cells, when cellular stress conditions lead to the loss of mitochondrial membrane potential, mitochondrial import is impaired leading to the precursor accumulating on the outer mitochondrial membrane (OMM). Post-translationally, autophosphorylated on Ser-205, which activates kinase activity and is required for substrate recognition. Loss of mitochondrial membrane potential results in the precursor accumulating on the outer mitochondrial membrane (OMM) where it is activated by autophosphorylation at Ser-205. Autophosphorylation is sufficient and essential for selective recruitment of park to depolarized mitochondria, likely via Pink1-dependent phosphorylation of polyubiquitin chains. Also autophosphorylated at Ser-377, Thr-386 and possibly Thr-530. Another report found evidence of autophosphorylation at Ser-154, Thr-186, Thr-218, Ser-267 and Thr-530, as well as a number of other minor sites, but determined that phosphorylation at these sites is not required for enzyme activity and may not occur in vivo.

It localises to the mitochondrion outer membrane. The protein resides in the mitochondrion inner membrane. Its subcellular location is the cytoplasm. It is found in the cytosol. It carries out the reaction L-seryl-[protein] + ATP = O-phospho-L-seryl-[protein] + ADP + H(+). The catalysed reaction is L-threonyl-[protein] + ATP = O-phospho-L-threonyl-[protein] + ADP + H(+). In terms of biological role, acts as a serine/threonine-protein kinase. Exhibits a substrate preference for proline at position P+1 and a general preference at several residues for basic residues such as arginine. Also exhibits moderate preferences for a phosphotyrosine at position P-3 and a tryptophan at P-5. Critical to mitochondrial homeostasis it mediates several pathways that maintain mitochondrial health and function. Protects against mitochondrial dysfunction during cellular stress by phosphorylating mitochondrial proteins such as park and likely Drp1, to coordinate mitochondrial quality control mechanisms that remove and replace dysfunctional mitochondrial components. Depending on the severity of mitochondrial damage and/or dysfunction, activity ranges from preventing apoptosis and stimulating mitochondrial biogenesis to regulating mitochondrial dynamics and eliminating severely damaged mitochondria via mitophagy. Appears to be particularly important in maintaining the physiology and function of cells with high energy demands that are undergoing stress or altered metabolic environment, including spermatids, muscle cells and neurons such as the dopaminergic (DA) neurons. Mediates the translocation and activation of park at the outer membrane (OMM) of dysfunctional/depolarized mitochondria. At the OMM of damaged mitochondria, phosphorylates pre-existing polyubiquitin chains, the Pink1-phosphorylated polyubiquitin then recruits park from the cytosol to the OMM where park is fully activated by phosphorylation at 'Ser-80' by Pink1. When cellular stress results in irreversible mitochondrial damage, functions with park to promote the clearance of dysfunctional and/or depolarized mitochondria by selective autophagy (mitophagy). The Pink1-park pathway also promotes fission and/or inhibits fusion of damaged mitochondria, by phosphorylating and thus promoting the park-dependent degradation of proteins involved in mitochondrial fusion/fission such as Marf, Opa1 and fzo. This prevents the refusion of unhealthy mitochondria with the mitochondrial network or initiates mitochondrial fragmentation facilitating their later engulfment by autophagosomes. Also likely to promote mitochondrial fission independently of park and Atg7-mediated mitophagy, via the phosphorylation and activation of Drp1. Regulates motility of damaged mitochondria by phosphorylating Miro which likely promotes its park-dependent degradation by the proteasome; in motor neurons, this inhibits mitochondrial intracellular anterograde transport along the axons which probably increases the chance of the mitochondria being eliminated in the soma. The Pink1-park pathway is also involved in mitochondrial regeneration processes such as promoting mitochondrial biogenesis, activating localized mitochondrial repair, promoting selective turnover of mitochondrial proteins and initiating the mitochondrial import of endogenous proteins. Involved in mitochondrial biogenesis by promoting the park-dependent ubiquitination of transcriptional repressor Paris which leads to its subsequent proteasomal degradation and allows activation of the transcription factor srl. Functions with park to promote localized mitochondrial repair by activating the translation of specific nuclear-encoded mitochondrial RNAs (nc-mtRNAs) on the mitochondrial surface, including several key electron transport chain component nc-mtRNAs. During oogenesis, phosphorylates and inactivates larp on the membrane of defective mitochondria, thus impairing local translation and mtDNA replication and consequently, reducing transmission of deleterious mtDNA mutations to the mature oocyte. Phosphorylates the mitochondrial acyl-CoA dehydrogenase Mcad, and appears to be important for maintaining fatty acid and amino acid metabolism via a mechanism that is independent of it's role in maintaining production of ATP. The chain is Serine/threonine-protein kinase Pink1, mitochondrial from Tribolium castaneum (Red flour beetle).